We begin with the raw amino-acid sequence, 245 residues long: Alanyl-tRNA editing protein AlaX-M (245 aa).

Zn(2+)-binding residues include His-107, His-111, Cys-210, and His-214.

The protein belongs to the class-II aminoacyl-tRNA synthetase family. Editing domain AlaX-M subfamily. It depends on Zn(2+) as a cofactor.

It is found in the cytoplasm. Functionally, functions in trans to edit the amino acid moiety from mischarged charged tRNA(Ala). The polypeptide is Alanyl-tRNA editing protein AlaX-M (alaXM) (Methanosarcina acetivorans (strain ATCC 35395 / DSM 2834 / JCM 12185 / C2A)).